Here is a 539-residue protein sequence, read N- to C-terminus: MLRTTASRKIVLRRGLASINTGTTVASKKASHKFRNTFWTIALSATAFYAGGIIYSQKNDKFGDFFSNNVPFAEDLLETYEHYHDRPTLFLEDSWDGLKAKSNDLLSGLTGSSQTRRSNRENIEVKKILSLEPLNIETENSDPQLKEIIGSLNDLINSLNDSNLSIPESEFNSIKKSNQNMLTNLSQLNETLKEALSNYMIQRTSEVITELNTQYENSKREFEKNLQKNLLQEVDEFKENLTKQKDKELEEKLKANEELLQAKHANEVGLLSITQVKEFNKIIKDKIEKERNGRLAHLEEINSEVNDLSKSIDRSSKILSKNEALVQLTFQVDEIKSRINNNNLPDVNIDKELSRLKLLSNLLSTFNKKSCCDDGDCCSCKKGNKNEGKEGKISCKCKPKTNPPSLLSVALDELESTCSGKKILSNEQIYNRWNLLADDFKTASLLPPNSGILGQLTAKVFSLFLFTKTGNPSNATDFDSVYARVGDNLRVSNLNDAVEEVVSLKGWPHKVCESWIEDARRKLEVQRLVEILDCEIRTL.

The transit peptide at 1 to 16 (MLRTTASRKIVLRRGL) directs the protein to the mitochondrion. The Mitochondrial matrix segment spans residues 17-36 (ASINTGTTVASKKASHKFRN). The chain crosses the membrane as a helical span at residues 37-56 (TFWTIALSATAFYAGGIIYS). The Mitochondrial intermembrane portion of the chain corresponds to 57-539 (QKNDKFGDFF…EILDCEIRTL (483 aa)). Residues 172–267 (NSIKKSNQNM…ELLQAKHANE (96 aa)) are a coiled coil.

This sequence belongs to the MICOS complex subunit Mic60 family. As to quaternary structure, component of the mitochondrial contact site and cristae organizing system (MICOS) complex.

Its subcellular location is the mitochondrion inner membrane. In terms of biological role, component of the MICOS complex, a large protein complex of the mitochondrial inner membrane that plays crucial roles in the maintenance of crista junctions, inner membrane architecture, and formation of contact sites to the outer membrane. Plays a role in keeping cristae membranes connected to the inner boundary membrane. Also promotes protein import via the mitochondrial intermembrane space assembly (MIA) pathway. This chain is MICOS complex subunit MIC60 (MIC60), found in Saccharomyces cerevisiae (strain YJM789) (Baker's yeast).